A 362-amino-acid polypeptide reads, in one-letter code: Cobalt-precorrin-5B C(1)-methyltransferase (362 aa).

The protein belongs to the CbiD family.

The enzyme catalyses Co-precorrin-5B + S-adenosyl-L-methionine = Co-precorrin-6A + S-adenosyl-L-homocysteine. The protein operates within cofactor biosynthesis; adenosylcobalamin biosynthesis; cob(II)yrinate a,c-diamide from sirohydrochlorin (anaerobic route): step 6/10. Functionally, catalyzes the methylation of C-1 in cobalt-precorrin-5B to form cobalt-precorrin-6A. The sequence is that of Cobalt-precorrin-5B C(1)-methyltransferase from Burkholderia lata (strain ATCC 17760 / DSM 23089 / LMG 22485 / NCIMB 9086 / R18194 / 383).